The chain runs to 66 residues: uncharacterized protein (66 aa).

Positions 1–21 are disordered; sequence MPGGDRTGPWGQGPRTGRRAG.

This is an uncharacterized protein from Archaeoglobus fulgidus (strain ATCC 49558 / DSM 4304 / JCM 9628 / NBRC 100126 / VC-16).